The sequence spans 510 residues: Holliday junction branch migration ATPase PINA (510 aa).

Homohexamer. Interacts with Holliday junction resolvase Hjc, interacts with helicase Hjm (Hel308).

It carries out the reaction ATP + H2O = ADP + phosphate + H(+). Functionally, important for growth at low temperatures (less than 65 degrees Celsius in this organism). Promotes Holliday junction (HJ) branch migration and unwinds Y-shaped DNA (but not replication forks or dsDNA) in an ATP hydrolysis-dependent manner. Stimulates cleavage by HJ resolvase Hjc. Hjc, Hjm (Hel308) and PINA coordinate HJ migration and cleavage of replication forks in a coordinated way. Probably acts as an ATP-dependent pump that pulls DNA through the hexamer. The chain is Holliday junction branch migration ATPase PINA from Sulfolobus acidocaldarius (strain ATCC 33909 / DSM 639 / JCM 8929 / NBRC 15157 / NCIMB 11770).